The chain runs to 153 residues: Histone H2B.3 (153 aa).

2 stretches are compositionally biased toward basic and acidic residues: residues Met1–Ala10 and Ala20–Lys54. The interval Met1–Lys60 is disordered. Residues Lys41 and Lys42 each carry the N6-acetyllysine modification. Lys149 participates in a covalent cross-link: Glycyl lysine isopeptide (Lys-Gly) (interchain with G-Cter in ubiquitin).

It belongs to the histone H2B family. In terms of assembly, the nucleosome is a histone octamer containing two molecules each of H2A, H2B, H3 and H4 assembled in one H3-H4 heterotetramer and two H2A-H2B heterodimers. The octamer wraps approximately 147 bp of DNA. Post-translationally, the N-terminus is blocked. In terms of processing, can be acetylated to form H2BK33ac and H2BK34ac. Acetylated mainly on the ubiquitinated form. Monoubiquitinated to form H2BK143ub1; which is increased during the light period and may give a specific tag for epigenetic transcriptional activation.

The protein resides in the nucleus. It localises to the chromosome. Its function is as follows. Core component of nucleosome. Nucleosomes wrap and compact DNA into chromatin, limiting DNA accessibility to the cellular machineries which require DNA as a template. Histones thereby play a central role in transcription regulation, DNA repair, DNA replication and chromosomal stability. DNA accessibility is regulated via a complex set of post-translational modifications of histones, also called histone code, and nucleosome remodeling. The protein is Histone H2B.3 of Chlamydomonas reinhardtii (Chlamydomonas smithii).